Here is a 225-residue protein sequence, read N- to C-terminus: Glutathione S-transferase Mu 3 (225 aa).

The 88-residue stretch at 5-92 folds into the GST N-terminal domain; the sequence is SSMVLGYWDI…YIARKHNMCG (88 aa). Residues 11–12, 50–54, and 63–64 contribute to the glutathione site; these read YW, WLDVK, and NL. Lys-54 is covalently cross-linked (Glycyl lysine isopeptide (Lys-Gly) (interchain with G-Cter in SUMO2)). Residue Lys-73 forms a Glycyl lysine isopeptide (Lys-Gly) (interchain with G-Cter in SUMO2) linkage. 76 to 77 contacts glutathione; that stretch reads QS. In terms of domain architecture, GST C-terminal spans 94-212; that stretch reads TEEEKIRVDI…QSDQFCKMPI (119 aa). Residue Tyr-120 coordinates substrate.

Belongs to the GST superfamily. Mu family. Homodimer. Post-translationally, the N-terminus is blocked. As to expression, testis and brain.

The protein resides in the cytoplasm. The enzyme catalyses RX + glutathione = an S-substituted glutathione + a halide anion + H(+). Its function is as follows. Conjugation of reduced glutathione to a wide number of exogenous and endogenous hydrophobic electrophiles. May govern uptake and detoxification of both endogenous compounds and xenobiotics at the testis and brain blood barriers. The sequence is that of Glutathione S-transferase Mu 3 (GSTM3) from Homo sapiens (Human).